Reading from the N-terminus, the 212-residue chain is Ion-translocating oxidoreductase complex subunit G (212 aa).

A helical transmembrane segment spans residues 9–29; it reads ASLLGLFALLCTALVALVNQF. Residue Thr-176 is modified to FMN phosphoryl threonine.

This sequence belongs to the RnfG family. As to quaternary structure, the complex is composed of six subunits: RnfA, RnfB, RnfC, RnfD, RnfE and RnfG. The cofactor is FMN.

The protein resides in the cell inner membrane. In terms of biological role, part of a membrane-bound complex that couples electron transfer with translocation of ions across the membrane. The polypeptide is Ion-translocating oxidoreductase complex subunit G (Shewanella loihica (strain ATCC BAA-1088 / PV-4)).